Here is an 81-residue protein sequence, read N- to C-terminus: Large ribosomal subunit protein bL27 (81 aa).

Residues 1 to 11 (MATSKSGGSSK) show a composition bias toward polar residues. Positions 1–26 (MATSKSGGSSKNGRDSISKRLGVKRS) are disordered.

Belongs to the bacterial ribosomal protein bL27 family.

This chain is Large ribosomal subunit protein bL27, found in Borrelia turicatae (strain 91E135).